A 128-amino-acid polypeptide reads, in one-letter code: uncharacterized protein (128 aa).

This is an uncharacterized protein from Bacillus subtilis (strain 168).